A 482-amino-acid chain; its full sequence is 2-succinylbenzoate--CoA ligase (482 aa).

The protein belongs to the ATP-dependent AMP-binding enzyme family. MenE subfamily.

It catalyses the reaction 2-succinylbenzoate + ATP + CoA = 2-succinylbenzoyl-CoA + AMP + diphosphate. It functions in the pathway quinol/quinone metabolism; 1,4-dihydroxy-2-naphthoate biosynthesis; 1,4-dihydroxy-2-naphthoate from chorismate: step 5/7. The protein operates within quinol/quinone metabolism; menaquinone biosynthesis. Its function is as follows. Converts 2-succinylbenzoate (OSB) to 2-succinylbenzoyl-CoA (OSB-CoA). The protein is 2-succinylbenzoate--CoA ligase of Bacillus cereus (strain ATCC 14579 / DSM 31 / CCUG 7414 / JCM 2152 / NBRC 15305 / NCIMB 9373 / NCTC 2599 / NRRL B-3711).